The sequence spans 312 residues: Glyoxylate/hydroxypyruvate reductase A (312 aa).

Arginine 227 is a catalytic residue. The Proton donor role is filled by histidine 275.

It belongs to the D-isomer specific 2-hydroxyacid dehydrogenase family. GhrA subfamily.

The protein localises to the cytoplasm. The enzyme catalyses glycolate + NADP(+) = glyoxylate + NADPH + H(+). The catalysed reaction is (R)-glycerate + NAD(+) = 3-hydroxypyruvate + NADH + H(+). It carries out the reaction (R)-glycerate + NADP(+) = 3-hydroxypyruvate + NADPH + H(+). In terms of biological role, catalyzes the NADPH-dependent reduction of glyoxylate and hydroxypyruvate into glycolate and glycerate, respectively. The sequence is that of Glyoxylate/hydroxypyruvate reductase A from Salmonella paratyphi C (strain RKS4594).